The primary structure comprises 628 residues: Ribosome assembly protein RSM22, mitochondrial (628 aa).

Residues 1–15 constitute a mitochondrion transit peptide; sequence MMKRCFSILPQNVRF. Residues C373, C379, C400, and C513 each coordinate [4Fe-4S] cluster.

Belongs to the methyltransferase superfamily. Rsm22 family. Associates with the mitochondrial ribosome (mitoribosome). Only transiently interacts with the mitoribosome.

It is found in the mitochondrion. Functionally, mitochondrial ribosome (mitoribosome) assembly factor. Binds at the interface of the head and body domains of the mitochondrial small ribosomal subunit (mt-SSU), occluding the mRNA channel and preventing compaction of the head domain towards the body. Probable inactive methyltransferase: retains the characteristic folding and ability to bind S-adenosyl-L-methionine, but it probably lost its methyltransferase activity. The chain is Ribosome assembly protein RSM22, mitochondrial (RSM22) from Saccharomyces cerevisiae (strain ATCC 204508 / S288c) (Baker's yeast).